We begin with the raw amino-acid sequence, 266 residues long: Apolipoprotein A-I (266 aa).

The N-terminal stretch at 1–18 (MKAALLTLAVLFLTGSQA) is a signal peptide. 2 tandem repeats follow at residues 67 to 88 (LKLLDNWDSLSSTVTKLREQIG) and 89 to 110 (PVTQEFWDNLEKETEVLRQEMS). Residues 67 to 266 (LKLLDNWDSL…DEATKKLNAQ (200 aa)) form a 10 X approximate tandem repeats region. Methionine sulfoxide is present on Met109. The 3; half-length repeat unit spans residues 111 to 121 (KDLEEVKQKVQ). 5 repeat units span residues 122–143 (PYLDDFQKKWQEEVELYRQKVA), 144–165 (PLGSELREGARQKLQELQEKLS), 166–187 (PLAEELRDRARTHVDALRAQLA), 188–209 (PYSDDLRERLAARLEALKEGGG), and 210–231 (ASLAEYHARASEQLSALGEKAR). Residues 232–242 (PALEDLRQGLL) form a 9; half-length repeat. Residues 243-266 (PVLESFKVSLLAAIDEATKKLNAQ) form repeat 10.

The protein belongs to the apolipoprotein A1/A4/E family. As to quaternary structure, homodimer. Interacts with APOA1BP and CLU. Component of a sperm activating protein complex (SPAP), consisting of APOA1, an immunoglobulin heavy chain, an immunoglobulin light chain and albumin. Interacts with NDRG1. Interacts with SCGB3A2. Interacts with NAXE and YJEFN3. Palmitoylated. Post-translationally, glycosylated. In terms of processing, phosphorylation sites are present in the extracellular medium. As to expression, major protein of plasma HDL, also found in chylomicrons. Synthesized in the liver and small intestine.

Its subcellular location is the secreted. In terms of biological role, participates in the reverse transport of cholesterol from tissues to the liver for excretion by promoting cholesterol efflux from tissues and by acting as a cofactor for the lecithin cholesterol acyltransferase (LCAT). As part of the SPAP complex, activates spermatozoa motility. The chain is Apolipoprotein A-I (APOA1) from Canis lupus familiaris (Dog).